The following is a 385-amino-acid chain: MYLMNTYSRFPATFVYGKGSWIYDEKGNAYLDFTSGIAVNVLGHSHPRLVEAIKDQAEKLIHCSNLFWNRPQMELAELLSKNTFGGKVFFANTGTEANEAAIKIARKYGKKKSEKKYRILSAHNSFHGRTLGSLTATGQPKYQKPFEPLVPGFEYFEFNNVEDLRRKMSEDVCAVFLEPIQGESGIVPATKEFLEEARKLCDEYDALLVFDEVQCGMGRTGKLFAYQKYGVVPDVLTTAKGLGGGVPIGAVIVNERANVLEPGDHGTTFGGNPLACRAGVTVIKELTKEGFLEEVEEKGNYLMKKLQEMKEEYDVVADVRGMGLMIGIQFREEVSNREVATKCFENKLLVVPAGNNTIRFLPPLTVEYGEIDLAVETLKKVLQGI.

Pyridoxal 5'-phosphate is bound by residues 94-95 (GT) and phenylalanine 126. N(2)-acetyl-L-ornithine is bound at residue arginine 129. 211-214 (DEVQ) contributes to the pyridoxal 5'-phosphate binding site. Lysine 240 carries the post-translational modification N6-(pyridoxal phosphate)lysine. Threonine 267 is a binding site for N(2)-acetyl-L-ornithine. Residue threonine 268 coordinates pyridoxal 5'-phosphate.

The protein belongs to the class-III pyridoxal-phosphate-dependent aminotransferase family. ArgD subfamily. As to quaternary structure, homodimer. Pyridoxal 5'-phosphate is required as a cofactor.

The protein resides in the cytoplasm. The catalysed reaction is N(2)-acetyl-L-ornithine + 2-oxoglutarate = N-acetyl-L-glutamate 5-semialdehyde + L-glutamate. It participates in amino-acid biosynthesis; L-arginine biosynthesis; N(2)-acetyl-L-ornithine from L-glutamate: step 4/4. The sequence is that of Acetylornithine aminotransferase from Thermotoga maritima (strain ATCC 43589 / DSM 3109 / JCM 10099 / NBRC 100826 / MSB8).